The following is a 1346-amino-acid chain: Toll-like receptor Tollo (1346 aa).

The first 21 residues, 1-21 (MLATTHMLYVLIATCVIPIFG), serve as a signal peptide directing secretion. The Extracellular portion of the chain corresponds to 22–1021 (AALSKTVLYQ…NQPPKLDYIP (1000 aa)). Asn63, Asn112, and Asn126 each carry an N-linked (GlcNAc...) asparagine glycan. LRR repeat units follow at residues 97–120 (LVELRDLTIEYCKLGNLTDGSFRG), 124–146 (LRNLTIRTHNGDWSTMSLEMASN), 151–174 (FRQLERLDLSLNNIWLIPDGMVCP), 176–198 (KSLQHLNASYNKIQDISNFYFSA), 209–232 (GSTLQSLDLSANKMVSLPTAMLSA), 234–256 (GRLTHLNMAKNSMSFLADRAFEG), 257–280 (LLSLRVVDLSANRLTSLPPELFAE), 282–304 (KQLQEIYLRNNSINVLAPGIFGE), 306–330 (AELLVLDLASNELNSQWINAATFVG), 331–354 (LKRLMMLDLSANKISRLEAHIFRP), 355–378 (LASLQILKLEDNYIDQLPGGIFAD), 380–402 (TNLHTLILSRNRISVIEQRTLQG), 404–426 (KNLLVLSLDFNRISRMDQRSLVN), 427–450 (CSQLQDLHLNDNKLQAVPEALAHV), 452–473 (LLKTLDVGENMISQIENTSITQ), 474–497 (LESLYGLRMTENSLTHIRRGVFDR), 498–521 (MSSLQILNLSQNKLKSIEAGSLQR), 523–544 (SQLQAIRLDGNQLKSIAGLFTE), 546–568 (PNLVWLNISGNRLEKFDYSHIPI), 570–591 (LQWLDVRANRITQLGNYFEIES), 593–614 (LSLSTFDASYNLLTEITASSIP), 615–637 (NSVEVLYLNDNQISKIQPYTFFK), and 638–661 (KPNLTRVDLVRNRLTTLEPNALRL). Asn182 carries an N-linked (GlcNAc...) asparagine glycan. Asn291 carries an N-linked (GlcNAc...) asparagine glycan. Residue Asn426 is glycosylated (N-linked (GlcNAc...) asparagine). Residue Asn468 is glycosylated (N-linked (GlcNAc...) asparagine). Asn505 carries N-linked (GlcNAc...) asparagine glycosylation. Asn552 carries N-linked (GlcNAc...) asparagine glycosylation. A glycan (N-linked (GlcNAc...) asparagine) is linked at Asn640. Intrachain disulfides connect Cys682–Cys710, Cys684–Cys733, Cys757–Cys763, and Cys761–Cys776. 6 LRR repeats span residues 790 to 813 (PMDSTQLYLDGNNFRELQSHAFIG), 814 to 837 (RKRLKVLHLNHSRIEVLHNRTFYG), 838 to 861 (LLELEVLQLQSNQLKALNGNEFQG), 863 to 885 (DNLQELYLQHNAIATIDTLTFTH), 887 to 909 (YHLKILRLDHNAITSFAVWNFLP), and 912 to 938 (LNELRLASNPWTCSCEFIDKLRDYINR). N-linked (GlcNAc...) asparagine glycans are attached at residues Asn823 and Asn832. A disulfide bridge links Cys924 with Cys950. Asn956 and Asn1000 each carry an N-linked (GlcNAc...) asparagine glycan. The chain crosses the membrane as a helical span at residues 1022-1042 (ILVAILTAFIFVMICISLVFI). Residues 1043-1346 (FRQEMRVWCH…PTPASRNLHM (304 aa)) lie on the Cytoplasmic side of the membrane. The TIR domain occupies 1074-1209 (KLFDAFVSYS…LFWQKLRFAL (136 aa)). The disordered stretch occupies residues 1235-1346 (HHHHHVHQQA…PTPASRNLHM (112 aa)). Over residues 1267–1300 (PGSFRRQPSLHQQQQQQQQIRGNNNTTQQQQQQQ) the composition is skewed to low complexity.

It belongs to the Toll-like receptor family. May interact (via the extracellular domain) with 18w (via the extracellular domain).

The protein resides in the cell membrane. It is found in the apical cell membrane. Toll-related receptor. Probably specific to larval innate immunity. Involved in the tracheal immune response of larvae to Gram-negative and perhaps Gram-positive bacteria; upon infection it negatively regulates the immune deficiency (Imd) signaling cascade specifically in the respiratory epithelium to prevent the overexpression of antimicrobial peptides (AMP). Involved in the NF-kappa-B-dependent apoptosis of unfit cells during cell competition. Involved in neuron-specific glycosylation. Positively controls the neuromuscular junction (NMJ) growth in presynaptic motorneurons, probably via the JNK pathway. During development of the peripheral nervous system, may function in the NF-kappa-B (rel) regulatory cascade to repress expression of the neuron-specific genes sc and ase in non-neuronal cells. Promotes heterophilic cell adhesion with 18w in vitro. May have a minor role in leg development. May be involved in determining the proximal cell fate in the wing, possibly by negatively regulating the Dpp signaling pathway. May also be involved in the Dpp signaling pathway in the eye. Possibly functions with 18w and Toll-6 during convergent extension, to help direct proper planar cell polarity, cell intercalation and axis elongation. The sequence is that of Toll-like receptor Tollo from Drosophila melanogaster (Fruit fly).